Consider the following 625-residue polypeptide: 1-deoxy-D-xylulose-5-phosphate synthase (625 aa).

Thiamine diphosphate contacts are provided by residues His-80 and 121–123 (GHS). Asp-152 contributes to the Mg(2+) binding site. Residues 153–154 (GS), Asn-181, Tyr-290, and Glu-371 each bind thiamine diphosphate. Asn-181 contacts Mg(2+).

This sequence belongs to the transketolase family. DXPS subfamily. In terms of assembly, homodimer. The cofactor is Mg(2+). Thiamine diphosphate serves as cofactor.

The enzyme catalyses D-glyceraldehyde 3-phosphate + pyruvate + H(+) = 1-deoxy-D-xylulose 5-phosphate + CO2. The protein operates within metabolic intermediate biosynthesis; 1-deoxy-D-xylulose 5-phosphate biosynthesis; 1-deoxy-D-xylulose 5-phosphate from D-glyceraldehyde 3-phosphate and pyruvate: step 1/1. Functionally, catalyzes the acyloin condensation reaction between C atoms 2 and 3 of pyruvate and glyceraldehyde 3-phosphate to yield 1-deoxy-D-xylulose-5-phosphate (DXP). The polypeptide is 1-deoxy-D-xylulose-5-phosphate synthase (Haemophilus influenzae (strain PittGG)).